The primary structure comprises 593 residues: Histone-arginine methyltransferase CARMER (593 aa).

One can recognise an SAM-dependent MTase PRMT-type domain in the interval 122-429; sequence ASQYFQFYGY…QRQSYDVEMD (308 aa). Residues Q135, R144, G168, E190, E219, and T247 each contribute to the S-adenosyl-L-methionine site. R482 carries the post-translational modification Asymmetric dimethylarginine; by autocatalysis. The segment at 521-540 is disordered; that stretch reads LISSTGRQQSQQQTTPAQPL. Low complexity predominate over residues 523 to 535; it reads SSTGRQQSQQQTT.

This sequence belongs to the class I-like SAM-binding methyltransferase superfamily. Protein arginine N-methyltransferase family. In terms of assembly, homodimer. In terms of processing, the dimethylated protein is the major form.

Its subcellular location is the cytoplasm. The protein resides in the nucleus. The catalysed reaction is L-arginyl-[protein] + 2 S-adenosyl-L-methionine = N(omega),N(omega)-dimethyl-L-arginyl-[protein] + 2 S-adenosyl-L-homocysteine + 2 H(+). Functionally, methylates (mono- and asymmetric dimethylation) the guanidino nitrogens of arginyl residues in proteins. May methylate histone H3 at 'Arg-17' and activate transcription via chromatin remodeling. The chain is Histone-arginine methyltransferase CARMER from Aedes aegypti (Yellowfever mosquito).